The sequence spans 563 residues: GTPase Obg (563 aa).

One can recognise an Obg domain in the interval 2–168 (SDFVDRVTVH…RDVILELKSI (167 aa)). The 181-residue stretch at 169-349 (ADVALVGFPS…LNWALADLVT (181 aa)) folds into the OBG-type G domain. Residues 175–182 (GFPSAGKS), 200–204 (FTTLV), 221–224 (DVPG), 301–304 (NKVD), and 330–332 (STA) contribute to the GTP site. 2 residues coordinate Mg(2+): S182 and T202. In terms of domain architecture, OCT spans 383 to 469 (DEGGNALDFT…DRAVEFDWDP (87 aa)). Positions 525 to 563 (MMAERKAGHWADPSVDDDRHDETSLFGRGETADDEDVEQ) are disordered.

This sequence belongs to the TRAFAC class OBG-HflX-like GTPase superfamily. OBG GTPase family. Monomer. Mg(2+) is required as a cofactor.

The protein resides in the cytoplasm. Functionally, an essential GTPase which binds GTP, GDP and possibly (p)ppGpp with moderate affinity, with high nucleotide exchange rates and a fairly low GTP hydrolysis rate. Plays a role in control of the cell cycle, stress response, ribosome biogenesis and in those bacteria that undergo differentiation, in morphogenesis control. The protein is GTPase Obg of Bifidobacterium adolescentis (strain ATCC 15703 / DSM 20083 / NCTC 11814 / E194a).